A 139-amino-acid polypeptide reads, in one-letter code: MLSTLYQNDLKKKRNRRRNRSAALVCCPQKEGSVLKPRIVTPKKPNSARRPVAKAKLTNKKFVVAHIPGTGHNLRKHSTILVRGGGCRDLPGVRHTCIRGVSDFLGVRDKTKRRSIYGIKRPPEMAKRVRRKFRAIFGQ.

The segment at 1–21 is disordered; sequence MLSTLYQNDLKKKRNRRRNRS. The segment covering 11-20 has biased composition (basic residues); that stretch reads KKKRNRRRNR.

This sequence belongs to the universal ribosomal protein uS12 family.

The protein resides in the mitochondrion. Its function is as follows. Protein S12 is involved in the translation initiation step. This Paramecium tetraurelia protein is Small ribosomal subunit protein uS12m (RPS12).